The primary structure comprises 255 residues: Zinc finger CCCH domain-containing protein 37 (255 aa).

2 C3H1-type zinc fingers span residues 98–128 and 137–159; these read AYTGEPCPDFRRRPGAACPRGSTCPFAHGTF and YRTRPCRAGVACRRRVCFFAHTA.

The sequence is that of Zinc finger CCCH domain-containing protein 37 from Oryza sativa subsp. japonica (Rice).